A 319-amino-acid polypeptide reads, in one-letter code: Acyl-coenzyme A thioesterase 8 (319 aa).

The tract at residues Met1 to Pro20 is disordered. Residues Asp232, Ser254, and Gln304 each act as charge relay system in the active site. A Microbody targeting signal motif is present at residues Ser317–Leu319.

This sequence belongs to the C/M/P thioester hydrolase family. In terms of assembly, homodimer. As to quaternary structure, (Microbial infection) Interacts with human immunodeficiency virus (HIV-1) Nef (via middle region); this interaction enhances ACOT8 Acyl-CoA thioesterase activity and occurs in a Nef myristoylation-independent manner. According to a second report, the interaction with HIV-1 Nef occurs in a Nef myristoylation-independent manner but does not enhance ACOT8 Acyl-CoA thioesterase activity. Detected in a T-cell line (at protein level). Ubiquitous.

It is found in the peroxisome matrix. The enzyme catalyses choloyl-CoA + H2O = cholate + CoA + H(+). It catalyses the reaction chenodeoxycholoyl-CoA + H2O = chenodeoxycholate + CoA + H(+). The catalysed reaction is acetyl-CoA + H2O = acetate + CoA + H(+). It carries out the reaction butanoyl-CoA + H2O = butanoate + CoA + H(+). The enzyme catalyses 2-methylpropanoyl-CoA + H2O = 2-methylpropanoate + CoA + H(+). It catalyses the reaction hexanoyl-CoA + H2O = hexanoate + CoA + H(+). The catalysed reaction is octanoyl-CoA + H2O = octanoate + CoA + H(+). It carries out the reaction decanoyl-CoA + H2O = decanoate + CoA + H(+). The enzyme catalyses dodecanoyl-CoA + H2O = dodecanoate + CoA + H(+). It catalyses the reaction tetradecanoyl-CoA + H2O = tetradecanoate + CoA + H(+). The catalysed reaction is hexadecanoyl-CoA + H2O = hexadecanoate + CoA + H(+). It carries out the reaction octadecanoyl-CoA + H2O = octadecanoate + CoA + H(+). The enzyme catalyses malonyl-CoA + H2O = malonate + CoA + H(+). It catalyses the reaction acetoacetyl-CoA + H2O = acetoacetate + CoA + H(+). The catalysed reaction is propanoyl-CoA + H2O = propanoate + CoA + H(+). It carries out the reaction succinyl-CoA + H2O = succinate + CoA + H(+). The enzyme catalyses glutaryl-CoA + H2O = glutarate + CoA + H(+). It catalyses the reaction hexanedioyl-CoA + H2O = hexanedioate + CoA + H(+). The catalysed reaction is octanedioyl-CoA + H2O = octanedioate + CoA + H(+). It carries out the reaction decanedioyl-CoA + H2O = decanedioate + CoA + H(+). The enzyme catalyses dodecanedioyl-CoA + H2O = dodecanedioate + CoA + H(+). It catalyses the reaction (9Z)-tetradecenoyl-CoA + H2O = (9Z)-tetradecenoate + CoA + H(+). The catalysed reaction is (9Z)-hexadecenoyl-CoA + H2O = (9Z)-hexadecenoate + CoA + H(+). It carries out the reaction (9Z)-octadecenoyl-CoA + H2O = (9Z)-octadecenoate + CoA + H(+). The enzyme catalyses (9Z,12Z)-octadecadienoyl-CoA + H2O = (9Z,12Z)-octadecadienoate + CoA + H(+). It catalyses the reaction eicosanoyl-CoA + H2O = eicosanoate + CoA + H(+). The catalysed reaction is (5Z,8Z,11Z,14Z)-eicosatetraenoyl-CoA + H2O = (5Z,8Z,11Z,14Z)-eicosatetraenoate + CoA + H(+). It carries out the reaction 4,8-dimethylnonanoyl-CoA + H2O = 4,8-dimethylnonanoate + CoA + H(+). The enzyme catalyses 2,6-dimethylheptanoyl-CoA + H2O = 2,6-dimethylheptanoate + CoA + H(+). It catalyses the reaction (3S)-3-hydroxy-3-methylglutaryl-CoA + H2O = 3-hydroxy-3-methylglutarate + CoA + H(+). The catalysed reaction is 3alpha,7alpha,12alpha-trihydroxy-5beta-cholestan-26-oyl-CoA + H2O = 3alpha,7alpha,12alpha-trihydroxy-5beta-cholestan-26-oate + CoA + H(+). It carries out the reaction 2-methyloctadecanoyl-CoA + H2O = 2-methyloctadecanoate + CoA + H(+). The enzyme catalyses prostaglandin F2alpha-CoA + H2O = prostaglandin F2alpha + CoA + H(+). The protein operates within lipid metabolism; fatty acid metabolism. With respect to regulation, inhibited by CoASH (IC(50)=10-15 uM). Also inhibited by cysteine-reactive agents. Its function is as follows. Catalyzes the hydrolysis of acyl-CoAs into free fatty acids and coenzyme A (CoASH), regulating their respective intracellular levels. Displays no strong substrate specificity with respect to the carboxylic acid moiety of Acyl-CoAs. Hydrolyzes medium length (C2 to C20) straight-chain, saturated and unsaturated acyl-CoAS but is inactive towards substrates with longer aliphatic chains. Moreover, it catalyzes the hydrolysis of CoA esters of bile acids, such as choloyl-CoA and chenodeoxycholoyl-CoA and competes with bile acid CoA:amino acid N-acyltransferase (BAAT). Is also able to hydrolyze CoA esters of dicarboxylic acids. It is involved in the metabolic regulation of peroxisome proliferation. (Microbial infection) May mediate Nef-induced down-regulation of CD4 cell-surface expression. The protein is Acyl-coenzyme A thioesterase 8 (ACOT8) of Homo sapiens (Human).